The chain runs to 401 residues: MACSTHLLSQSLYPLNRANPAAARGHLRFQASPSVRLGSGTSRRRALGLRVAASAEQGRRQVEVEYDLQAKFNKLADQIDQNAGITRLNLFSPCKINVFLRITGKRPDGFHDLASLFHVISLGDTIKFSLSPSKSKDRLSTNVAGVPVDESNLIIKALNLYRKKTGTDNFFWIHLDKKVPTGAGLGGGSSNAATALWAANQFSGCIASEKELQEWSGEIGSDIPFFFSQGAAYCTGRGEIVEDIRNPLPANLPMVLVKPPEACSTAEVYKRLRLEHTSQTDPLVLLKEITENGISQDACVNDLEPPAFEVLPSLKRLKKRIIAANRGDYDAVFMSGSGSTIVGIGSPDPPAFVYDDDDYKDTFVSEACFLTRNENEWYREPISSKITSEEDLPPEVASVSD.

The transit peptide at 1–52 (MACSTHLLSQSLYPLNRANPAAARGHLRFQASPSVRLGSGTSRRRALGLRVA) directs the protein to the chloroplast. 180-190 (PTGAGLGGGSS) is an ATP binding site.

The protein belongs to the GHMP kinase family. IspE subfamily.

Its subcellular location is the plastid. It is found in the chloroplast stroma. It carries out the reaction 4-CDP-2-C-methyl-D-erythritol + ATP = 4-CDP-2-C-methyl-D-erythritol 2-phosphate + ADP + H(+). It functions in the pathway isoprenoid biosynthesis; isopentenyl diphosphate biosynthesis via DXP pathway; isopentenyl diphosphate from 1-deoxy-D-xylulose 5-phosphate: step 3/6. Its function is as follows. Enzyme of the plastid non-mevalonate pathway for isoprenoid biosynthesis that catalyzes the phosphorylation of the position 2 hydroxy group of 4-diphosphocytidyl-2C-methyl-D-erythritol. Is essential for chloroplast development. In Oryza sativa subsp. japonica (Rice), this protein is 4-diphosphocytidyl-2-C-methyl-D-erythritol kinase, chloroplastic (ISPE).